The primary structure comprises 114 residues: Large ribosomal subunit protein uL22 (114 aa).

This sequence belongs to the universal ribosomal protein uL22 family. As to quaternary structure, part of the 50S ribosomal subunit.

In terms of biological role, this protein binds specifically to 23S rRNA; its binding is stimulated by other ribosomal proteins, e.g. L4, L17, and L20. It is important during the early stages of 50S assembly. It makes multiple contacts with different domains of the 23S rRNA in the assembled 50S subunit and ribosome. Functionally, the globular domain of the protein is located near the polypeptide exit tunnel on the outside of the subunit, while an extended beta-hairpin is found that lines the wall of the exit tunnel in the center of the 70S ribosome. The sequence is that of Large ribosomal subunit protein uL22 from Desulfitobacterium hafniense (strain Y51).